Consider the following 237-residue polypeptide: tRNA (guanine-N(7)-)-methyltransferase (237 aa).

Residues E65, E90, D117, and D140 each contribute to the S-adenosyl-L-methionine site. D140 is an active-site residue. Residues K144, D176, and 212–215 contribute to the substrate site; that span reads TKFE. Positions 197 to 217 are disordered; it reads TCGPRQFSPRGERPETKFERR. Over residues 206 to 217 the composition is skewed to basic and acidic residues; it reads RGERPETKFERR.

This sequence belongs to the class I-like SAM-binding methyltransferase superfamily. TrmB family.

The enzyme catalyses guanosine(46) in tRNA + S-adenosyl-L-methionine = N(7)-methylguanosine(46) in tRNA + S-adenosyl-L-homocysteine. The protein operates within tRNA modification; N(7)-methylguanine-tRNA biosynthesis. Functionally, catalyzes the formation of N(7)-methylguanine at position 46 (m7G46) in tRNA. This Alkalilimnicola ehrlichii (strain ATCC BAA-1101 / DSM 17681 / MLHE-1) protein is tRNA (guanine-N(7)-)-methyltransferase.